A 173-amino-acid polypeptide reads, in one-letter code: RNA pyrophosphohydrolase (173 aa).

In terms of domain architecture, Nudix hydrolase spans 6-149 (GFRANVGIIL…KRGVYRRALR (144 aa)). The Nudix box signature appears at 38-59 (GGIDEGETPLDAMYRELWEEVG).

Belongs to the Nudix hydrolase family. RppH subfamily. A divalent metal cation serves as cofactor.

Functionally, accelerates the degradation of transcripts by removing pyrophosphate from the 5'-end of triphosphorylated RNA, leading to a more labile monophosphorylated state that can stimulate subsequent ribonuclease cleavage. This Psychrobacter sp. (strain PRwf-1) protein is RNA pyrophosphohydrolase.